We begin with the raw amino-acid sequence, 532 residues long: Undecaprenyl-phosphate glucose phosphotransferase (532 aa).

5 helical membrane passes run 81-101 (QVVV…CIAW), 110-130 (ELSG…FLFP), 155-175 (VAFG…PFGV), 183-203 (WLTF…YILH), and 344-364 (TASV…ALAI).

This sequence belongs to the bacterial sugar transferase family.

It localises to the membrane. The enzyme catalyses di-trans,octa-cis-undecaprenyl phosphate + UDP-alpha-D-glucose = alpha-D-glucosyl di-trans,octa-cis-undecaprenyl diphosphate + UMP. In terms of biological role, involved in the biosynthesis of the exopolysaccharide acetan, a water-soluble polysaccharide involved in production of bacterial cellulose (BC). This Komagataeibacter xylinus (Gluconacetobacter xylinus) protein is Undecaprenyl-phosphate glucose phosphotransferase (aceA).